Consider the following 151-residue polypeptide: MGRMHAPGKGISSSALPYRRTPPSWLKTTSEEVVEQIVKLARKGLTPSQIGVTLRNSHGIPQVRFVTGNKILRILKSQGLGPSIPEDLWHLIKKAVAVRKHMETNRKDKDSKFRLILIESRIHRLARYYKTKQQIPPTFKYDSATASTLIA.

Belongs to the universal ribosomal protein uS15 family.

In Agaricus bisporus (White button mushroom), this protein is Small ribosomal subunit protein uS15 (RPS13).